The primary structure comprises 931 residues: Envelope glycoprotein B (931 aa).

Residues 1–71 form the signal peptide; the sequence is MSPCGYYSKW…FSMFVTAVVS (71 aa). The Virion surface portion of the chain corresponds to 72-786; it reads VSPSSFYESL…HGFTTFLSNP (715 aa). 5 disulfide bridges follow: Cys122/Cys584, Cys139/Cys540, Cys213/Cys277, Cys369/Cys417, and Cys608/Cys645. Asn147 carries N-linked (GlcNAc...) asparagine; by host glycosylation. Positions 179-185 are involved in fusion and/or binding to host membrane; the sequence is AWAGSSY. Residue Asn257 is glycosylated (N-linked (GlcNAc...) asparagine; by host). Positions 264 to 271 are involved in fusion and/or binding to host membrane; sequence GTPGTYRT. N-linked (GlcNAc...) asparagine; by host glycosylation is found at Asn435, Asn503, Asn620, and Asn686. 2 hydrophobic membrane proximal region regions span residues 731–784 and 764–784; these read IDKV…TFLS and VVLGATGALLSTVHGFTTFLS. The chain crosses the membrane as a helical span at residues 787 to 807; that stretch reads FGALAVGLLVLAGLVAAFFAY. Residues 808-931 are Intravirion-facing; it reads RYVLKLKTSP…RVRTENVTGV (124 aa). Positions 881-884 match the Golgi targeting motif; it reads YMTL. The Di-leucine internalization motif motif lies at 904–906; that stretch reads LLT. Positions 920–923 match the Internalization motif motif; sequence YSRV.

Belongs to the herpesviridae glycoprotein B family. As to quaternary structure, homotrimer; disulfide-linked. Binds to heparan sulfate proteoglycans. Interacts with gH/gL heterodimer. Interacts with gE. Post-translationally, a proteolytic cleavage by host furin generates two subunits that remain linked by disulfide bonds.

The protein localises to the virion membrane. It localises to the host cell membrane. It is found in the host endosome membrane. The protein resides in the host Golgi apparatus membrane. Envelope glycoprotein that forms spikes at the surface of virion envelope. Essential for the initial attachment to heparan sulfate moieties of the host cell surface proteoglycans. Involved in fusion of viral and cellular membranes leading to virus entry into the host cell. Following initial binding to its host receptors, membrane fusion is mediated by the fusion machinery composed at least of gB and the heterodimer gH/gL. May be involved in the fusion between the virion envelope and the outer nuclear membrane during virion egress. This is Envelope glycoprotein B from Varicella-zoster virus (strain Dumas) (HHV-3).